We begin with the raw amino-acid sequence, 131 residues long: Fumarate reductase subunit C (131 aa).

3 helical membrane passes run Glu30–Leu50, Phe63–His83, and Ile109–Leu129.

It belongs to the FrdC family. In terms of assembly, part of an enzyme complex containing four subunits: a flavoprotein (FrdA), an iron-sulfur protein (FrdB), and two hydrophobic anchor proteins (FrdC and FrdD).

The protein localises to the cell inner membrane. Two distinct, membrane-bound, FAD-containing enzymes are responsible for the catalysis of fumarate and succinate interconversion; fumarate reductase is used in anaerobic growth, and succinate dehydrogenase is used in aerobic growth. Anchors the catalytic components of the fumarate reductase complex to the cell inner membrane, binds quinones. This chain is Fumarate reductase subunit C, found in Shigella boydii serotype 4 (strain Sb227).